The primary structure comprises 300 residues: Protein Bel-1 (300 aa).

The disordered stretch occupies residues 1–50 (MDSYEKEESVASTSGIQDLQTLSELVGPENAGEGELTIAEEPEENPRRPR). The span at 10–23 (VASTSGIQDLQTLS) shows a compositional bias: polar residues. A DNA-binding region spans residues 89-200 (SKSLCKRLIL…SEGPKPRPRH (112 aa)). Positions 209 to 244 (FEKHHKPRQKRPRRRSIDNESCASSSDTMANEPGSL) are disordered. Residues 211-222 (KHHKPRQKRPRR) are compositionally biased toward basic residues. The Nuclear localization signal signature appears at 214–223 (KPRQKRPRRR). The transactivation domain stretch occupies residues 224 to 300 (SIDNESCASS…PSGSGEHSVL (77 aa)). Over residues 227 to 237 (NESCASSSDTM) the composition is skewed to polar residues.

In terms of assembly, homodimer or homomultimer. Forms complexes with the host nuclear factors NFIA, NFIB, NFIC or NFIX.

The protein localises to the host nucleus. Transcriptional transactivator that activates the viral internal promoter (IP), thereby enhancing its own expression. This transactivation is repressed by nuclear factor I. Also transactivates the long terminal repeat (LTR) promoter, thereby inducing structural gene expression, initiating the late phase of infection. It is therefore a key regulator of viral gene expression. It directly binds to and activates DNA target sites of viral promoters and those of distinct cellular genes. Required for viral replication. The chain is Protein Bel-1 (bel1) from Human spumaretrovirus (SFVcpz(hu)).